The sequence spans 110 residues: Large ribosomal subunit protein uL22 (110 aa).

The protein belongs to the universal ribosomal protein uL22 family. In terms of assembly, part of the 50S ribosomal subunit.

In terms of biological role, this protein binds specifically to 23S rRNA; its binding is stimulated by other ribosomal proteins, e.g. L4, L17, and L20. It is important during the early stages of 50S assembly. It makes multiple contacts with different domains of the 23S rRNA in the assembled 50S subunit and ribosome. Functionally, the globular domain of the protein is located near the polypeptide exit tunnel on the outside of the subunit, while an extended beta-hairpin is found that lines the wall of the exit tunnel in the center of the 70S ribosome. The chain is Large ribosomal subunit protein uL22 from Aliivibrio fischeri (strain MJ11) (Vibrio fischeri).